Here is a 459-residue protein sequence, read N- to C-terminus: Tubulin gamma chain (459 aa).

A GTP-binding site is contributed by A142–G148. A disordered region spans residues A440–G459.

Belongs to the tubulin family.

It localises to the cytoplasm. Its subcellular location is the cytoskeleton. It is found in the microtubule organizing center. The protein resides in the spindle pole body. Functionally, tubulin is the major constituent of microtubules. The gamma chain is found at microtubule organizing centers (MTOC) such as the spindle poles or the centrosome, suggesting that it is involved in the minus-end nucleation of microtubule assembly. In Cochliobolus heterostrophus (strain C5 / ATCC 48332 / race O) (Southern corn leaf blight fungus), this protein is Tubulin gamma chain (TUB4).